We begin with the raw amino-acid sequence, 981 residues long: MDTFKRWLNKPKADDKSLLARFFHADRSLTAVASELDSFDGRAEPDRCTRLVSRLRQNQDKVLAITNLIMEELLGEDRDPRAFRAKFPEEVLQENLAGQLWFGAECLAAGSSIMNRETESKEMRPLAQAVTKSLGNVRVLLRDQCLKNNVPNSKTLHLDLNDSTTEQLYESLKIFDRLFAEFELSYVSAMVQVKSRHEYEMQQWIGVLFSETLQRALKIGLLDQEMVDAFDPGLMFSIPRLAIVAGLVVYAKGPLNMDMPGDQLSEMFRPFRTILIKIRDLLRNLNNQELYQLEKLLCTNEDINTKVPLGSSSIEAPSPEHSAHPTTSSSQNNNNSSNNNHSSSSTTTTTMGTTNTHRTVERLVDQRNNNHNSNSNSSTNPTVEGATLRSPSMLSLSATSTPTASPAPSPTPSHSIDSTSSAATSSTNPPADWSDGDDEDEDDDDIEVDEEDLESSDDDTDEEQLLKDIVAADCASGYLIPNTNLGNLLQPQEVPLTDNFVASEDDEYGTAEQQGHQGLEEEEPSTSAAMLAATRTLQRLRLPSSDTEPLAEPTTIKATEEQMQQPNGRHQESHSHSHRHHQRHHHHHHHRHSHQHRQPHPHRTTRSGRKRCSLEVADPETIQPEREQNLASGDTSAASSLSDDVSLAMRNTTARLKFKSTENLLHRLFVCIAGVADQLQTNFASDLRQILRSVFLMNMSSAQEEIDIPEKTKESELFEFRASENDVIQESAGSNQSIYSAEEVNPELDNVFSAGGGNQATGQRHSAGASMQRNNTIDLASQSGEGSPSGATMSTSRSHVTRSRSLGDQEAASSATSSTAQLRQQEQQQQLQIQLQRQRNNSVGSNTPSSASSTSSSSEQNSPVSARSGSRRRLQSNNETQMPSSATSTSATLSPPAWIPDGKAPRCMACQTPFTAFRRRHHCRNCGGVFCGVCSNASAPLPKYGLTKAVRVCRDCYVREVRSGMGVQGVQRVQSVQASAS.

Positions 308–462 (PLGSSSIEAP…LESSDDDTDE (155 aa)) are disordered. Composition is skewed to low complexity over residues 326–356 (TTSS…TTNT), 369–380 (NNHNSNSNSSTN), 390–404 (SPSM…TPTA), and 412–433 (PSHS…PADW). Acidic residues predominate over residues 434–462 (SDGDDEDEDDDDIEVDEEDLESSDDDTDE). A phosphoserine mark is found at Ser-544 and Ser-545. Disordered stretches follow at residues 561-642 (EQMQ…SSLS) and 749-897 (DNVF…SPPA). Basic residues predominate over residues 576–611 (HSHRHHQRHHHHHHHRHSHQHRQPHPHRTTRSGRKR). A compositionally biased stretch (low complexity) spans 630-642 (LASGDTSAASSLS). The segment covering 760 to 791 (ATGQRHSAGASMQRNNTIDLASQSGEGSPSGA) has biased composition (polar residues). A Phosphoserine modification is found at Ser-805. 2 stretches are compositionally biased toward low complexity: residues 811 to 866 (AASS…PVSA) and 883 to 896 (PSSA…LSPP). The segment at 901–961 (DGKAPRCMAC…VCRDCYVREV (61 aa)) adopts an FYVE-type zinc-finger fold. Zn(2+) is bound by residues Cys-907, Cys-910, Cys-923, Cys-926, Cys-931, Cys-934, Cys-953, and Cys-956.

This sequence belongs to the lst-2 family.

In terms of biological role, negative regulator of epidermal growth factor receptor (EGFR) signaling. The sequence is that of Lateral signaling target protein 2 homolog from Drosophila erecta (Fruit fly).